The following is a 268-amino-acid chain: Small ribosomal subunit protein eS1 (268 aa).

A disordered region spans residues 1–21 (MAVGKNKGLSKGGKKGGKKKV).

This sequence belongs to the eukaryotic ribosomal protein eS1 family. Component of the small ribosomal subunit. Mature ribosomes consist of a small (40S) and a large (60S) subunit. The 40S subunit contains about 33 different proteins and 1 molecule of RNA (18S). The 60S subunit contains about 49 different proteins and 3 molecules of RNA (28S, 5.8S and 5S).

The protein resides in the cytoplasm. Functionally, essential for oogenesis; required for late follicle cell development. The sequence is that of Small ribosomal subunit protein eS1 from Drosophila erecta (Fruit fly).